Here is a 372-residue protein sequence, read N- to C-terminus: MPPPQQGPCGHHLLLLLALLLPSLPLTRAPVPPGPAAALLQALGLRDEPQGAPRLRPVPPVMWRLFRRRDPQETRSGSRRTSPGVTLQPCHVEELGVAGNIVRHIPDRGAPTRASEPASAAGHCPEWTVVFDLSAVEPAERPSRARLELRFAAAAAAAPEGGWELSVAQAGQGAGADPGPVLLRQLVPALGPPVRAELLGAAWARNASWPRSLRLALALRPRAPAACARLAEASLLLVTLDPRLCHPLARPRRDAEPVLGGGPGGACRARRLYVSFREVGWHRWVIAPRGFLANYCQGQCALPVALSGSGGPPALNHAVLRALMHAAAPGAADLPCCVPARLSPISVLFFDNSDNVVLRQYEDMVVDECGCR.

Positions 1 to 29 (MPPPQQGPCGHHLLLLLALLLPSLPLTRA) are cleaved as a signal peptide. Positions 30–253 (PVPPGPAAAL…LCHPLARPRR (224 aa)) are excised as a propeptide. Positions 67–86 (RRRDPQETRSGSRRTSPGVT) are disordered. A glycan (N-linked (GlcNAc...) asparagine) is linked at N206. 3 cysteine pairs are disulfide-bonded: C267-C337, C296-C369, and C300-C371.

The protein belongs to the TGF-beta family. Homodimer; disulfide-linked. Expressed in the brain.

The protein resides in the secreted. Functionally, may mediate cell differentiation events during embryonic development. This chain is Embryonic growth/differentiation factor 1 (GDF1), found in Homo sapiens (Human).